Here is a 581-residue protein sequence, read N- to C-terminus: 2-succinyl-5-enolpyruvyl-6-hydroxy-3-cyclohexene-1-carboxylate synthase (581 aa).

Belongs to the TPP enzyme family. MenD subfamily. Homodimer. Mg(2+) is required as a cofactor. The cofactor is Mn(2+). Requires thiamine diphosphate as cofactor.

The enzyme catalyses isochorismate + 2-oxoglutarate + H(+) = 5-enolpyruvoyl-6-hydroxy-2-succinyl-cyclohex-3-ene-1-carboxylate + CO2. Its pathway is quinol/quinone metabolism; 1,4-dihydroxy-2-naphthoate biosynthesis; 1,4-dihydroxy-2-naphthoate from chorismate: step 2/7. The protein operates within quinol/quinone metabolism; menaquinone biosynthesis. In terms of biological role, catalyzes the thiamine diphosphate-dependent decarboxylation of 2-oxoglutarate and the subsequent addition of the resulting succinic semialdehyde-thiamine pyrophosphate anion to isochorismate to yield 2-succinyl-5-enolpyruvyl-6-hydroxy-3-cyclohexene-1-carboxylate (SEPHCHC). The polypeptide is 2-succinyl-5-enolpyruvyl-6-hydroxy-3-cyclohexene-1-carboxylate synthase (Psychromonas ingrahamii (strain DSM 17664 / CCUG 51855 / 37)).